We begin with the raw amino-acid sequence, 717 residues long: Aryl hydrocarbon receptor nuclear translocator 2 (717 aa).

Disordered stretches follow at residues 1-20 (MATP…PGSV) and 35-74 (MAGA…IERR). R42 is modified (omega-N-methylarginine). The span at 63 to 73 (FSRENHSEIER) shows a compositional bias: basic and acidic residues. Residues 63–116 (FSRENHSEIERRRRNKMTQYITELSDMVPTCSALARKPDKLTILRMAVSHMKSM) form the bHLH domain. 2 PAS domains span residues 134-209 (TEQE…MTGR) and 323-393 (PVCM…VKLK). In terms of domain architecture, PAC spans 398 to 441 (SVMYRFRTKNREWMLIRTSSFTFQNPYSDEIEYIICTNTNVKQL). A disordered region spans residues 548 to 717 (NDIQSSSSTG…DLGMFPPFSE (170 aa)). Composition is skewed to polar residues over residues 549–574 (DIQS…QVAW) and 585–605 (QIPS…TSHT). Over residues 610–625 (PSSYSPLSSPATSSPS) the composition is skewed to low complexity. Residues 642–651 (SGQSSGQFQG) are compositionally biased toward polar residues. The span at 658 to 680 (SQWQSQHHGQQSGEQHSHQQPGQ) shows a compositional bias: low complexity.

Efficient DNA binding requires dimerization with another bHLH protein. Heterodimer with NPAS4. Heterodimer with SIM1. Heterodimer with the aryl hydrocarbon receptor (AHR) or the SIM1 protein. Interacts with TACC3.

The protein resides in the nucleus. Transcription factor that plays a role in the development of the hypothalamo-pituitary axis, postnatal brain growth, and visual and renal function. Specifically recognizes the xenobiotic response element (XRE). This chain is Aryl hydrocarbon receptor nuclear translocator 2 (ARNT2), found in Homo sapiens (Human).